We begin with the raw amino-acid sequence, 1010 residues long: Phosphoenolpyruvate carboxylase (1010 aa).

Residues 1-18 are compositionally biased toward polar residues; it reads MIMRSPETSGASMPQSTA. Disordered stretches follow at residues 1 to 36 and 132 to 154; these read MIMR…PGAG and LRPS…PPLA. Active-site residues include His-195 and Lys-652. Positions 967 to 986 are disordered; that stretch reads QNRQPPMSESPGTPEDRRTY.

It belongs to the PEPCase type 1 family. Requires Mg(2+) as cofactor.

The enzyme catalyses oxaloacetate + phosphate = phosphoenolpyruvate + hydrogencarbonate. Its function is as follows. Forms oxaloacetate, a four-carbon dicarboxylic acid source for the tricarboxylic acid cycle. In Parasynechococcus marenigrum (strain WH8102), this protein is Phosphoenolpyruvate carboxylase.